The primary structure comprises 132 residues: UPF0329 protein ECU07_0050/ECU09_2020 (132 aa).

Belongs to the UPF0329 family.

This chain is UPF0329 protein ECU07_0050/ECU09_2020, found in Encephalitozoon cuniculi (strain GB-M1) (Microsporidian parasite).